A 100-amino-acid chain; its full sequence is Probable DNA-binding protein HU (100 aa).

This sequence belongs to the bacterial histone-like protein family.

Histone-like DNA-binding protein which is capable of wrapping DNA to stabilize it, and thus to prevent its denaturation under extreme environmental conditions. This chain is Probable DNA-binding protein HU (hup), found in Chlamydia pneumoniae (Chlamydophila pneumoniae).